A 368-amino-acid chain; its full sequence is Protein-glutamate methylesterase/protein-glutamine glutaminase 2 (368 aa).

One can recognise a Response regulatory domain in the interval 6–123; that stretch reads KVLLVDDSAV…KEYLESAAGE (118 aa). Position 57 is a 4-aspartylphosphate (Asp-57). Residues 169–355 enclose the CheB-type methylesterase domain; it reads IAGANKIAAL…SLERIPQCVL (187 aa). Catalysis depends on residues Ser-181, His-207, and Asp-303.

Belongs to the CheB family. Post-translationally, phosphorylated by CheA. Phosphorylation of the N-terminal regulatory domain activates the methylesterase activity.

Its subcellular location is the cytoplasm. The enzyme catalyses [protein]-L-glutamate 5-O-methyl ester + H2O = L-glutamyl-[protein] + methanol + H(+). The catalysed reaction is L-glutaminyl-[protein] + H2O = L-glutamyl-[protein] + NH4(+). Functionally, involved in chemotaxis. Part of a chemotaxis signal transduction system that modulates chemotaxis in response to various stimuli. Catalyzes the demethylation of specific methylglutamate residues introduced into the chemoreceptors (methyl-accepting chemotaxis proteins or MCP) by CheR. Also mediates the irreversible deamidation of specific glutamine residues to glutamic acid. In Hahella chejuensis (strain KCTC 2396), this protein is Protein-glutamate methylesterase/protein-glutamine glutaminase 2.